The following is a 509-amino-acid chain: Flotillin-like protein FloT (509 aa).

Residues 1–3 are Cytoplasmic-facing; it reads MTM. Residues 4–24 lie within the membrane without spanning it; it reads PIIMIIGVVFFLLIALIAVFI. Residues 25-509 lie on the Cytoplasmic side of the membrane; it reads TKYRTAGPDE…KEAKTIQKSE (485 aa). The segment at 119 to 301 is PHB domain; it reads AAEQFLGKSK…KIIERQKQIE (183 aa). Residues 203–509 form a required for correct localization region; that stretch reads RIAQVKRDAD…KEAKTIQKSE (307 aa). Short sequence motifs (EA repeat) lie at residues 342–344, 357–360, 370–373, and 390–394; these read AEA, AEAE, and AEAEA. The interval 485–509 is not required for correct localization; it reads KGNVKQSINELTNEIKEAKTIQKSE.

Belongs to the band 7/mec-2 family. Flotillin subfamily. As to quaternary structure, homooligomerizes. Oligomerizes in very large complexes in vitro. Interacts with FloA, FtsH, FtsX, OppA, SdhA and SecY in detergent-resistant membrane (DRM) fractions. Interacts with FtsH at midcell. Interacts with FloA. Interacts in vivo with KinC, FloA, FtsH and ResE. Interacts with ResE, colocalizes with ResE in FloT-only membrane rafts. Another study shows nearly complete colocalization with NfeD2, but only minor colocalization with FtsH or KinC.

Its subcellular location is the cell membrane. The protein resides in the membrane raft. Its function is as follows. Found in functional membrane microdomains (FMM) that may be equivalent to eukaryotic membrane rafts. FMMs are highly dynamic and increase in number as cells age. FloA and FloT function is partially redundant; double deletions have marked synthetic phenotypes. Flotillins are thought to be important factors in membrane fluidity, especially during periods of rapid growth in rich media. Whether specific proteins are associated with FMMs is controversial; in one study FloT rafts have been shown to include proteins involved in adaptation to stationary phase, while FloA-FloT rafts include proteins involved in differentiation including sporulation, biofilm formation and DNA uptake competence. Another (more finely resolved) study only showed association of NfeD2 with FloT rafts of all the proteins examined. Aids homooligomerization of KinC and KinD but not KinB, may prevent incorrect hetero-association of the above kinases. Simultaneous overexpression of both FloA and FloT leads to defects in cell division and differentiation, in part caused by stabilization of FtsH and its subsequent increased ability to degrade proteins. Cells make more biofilm, are about half as long, have less EzrA and more frequent Z-rings. Involved in spatial organization of membranes, perhaps recruiting proteins (e.g. NfeD2) to specific membrane regions. Plays a role in phosphorylation of master regulator Spo0A, an early sporulation event. Plays a non-redundant role with dynamin-like protein A (dynA) in membrane dynamics and cell shape. The chain is Flotillin-like protein FloT from Bacillus subtilis (strain 168).